Consider the following 221-residue polypeptide: uncharacterized protein (221 aa).

Positions 40–162 (TIEVEPSPVQ…EPPEKVELSP (123 aa)) are disordered. Positions 47–60 (PVQQDNPPISSEQA) are enriched in polar residues. The span at 82–92 (SSAQQEATAQT) shows a compositional bias: low complexity.

This is an uncharacterized protein from Homo sapiens (Human).